The sequence spans 655 residues: uncharacterized protein (655 aa).

Positions 245-469 (PGVIAQALFT…NLKVIVNLGY (225 aa)) constitute a PE-PPE domain.

The protein belongs to the mycobacterial PPE family.

This is an uncharacterized protein from Mycobacterium tuberculosis (strain ATCC 25618 / H37Rv).